Consider the following 339-residue polypeptide: Anthranilate phosphoribosyltransferase (339 aa).

5-phospho-alpha-D-ribose 1-diphosphate-binding positions include Gly-80, 83-84, Thr-88, 90-93, 108-116, and Ser-120; these read GD, NIST, and KHGNRSVSS. Gly-80 contacts anthranilate. Ser-92 lines the Mg(2+) pocket. Asn-111 provides a ligand contact to anthranilate. Arg-166 contributes to the anthranilate binding site. Mg(2+)-binding residues include Asp-225 and Glu-226.

This sequence belongs to the anthranilate phosphoribosyltransferase family. Homodimer. Requires Mg(2+) as cofactor.

The enzyme catalyses N-(5-phospho-beta-D-ribosyl)anthranilate + diphosphate = 5-phospho-alpha-D-ribose 1-diphosphate + anthranilate. It functions in the pathway amino-acid biosynthesis; L-tryptophan biosynthesis; L-tryptophan from chorismate: step 2/5. Functionally, catalyzes the transfer of the phosphoribosyl group of 5-phosphorylribose-1-pyrophosphate (PRPP) to anthranilate to yield N-(5'-phosphoribosyl)-anthranilate (PRA). This Alkaliphilus metalliredigens (strain QYMF) protein is Anthranilate phosphoribosyltransferase.